A 36-amino-acid polypeptide reads, in one-letter code: NAIFSKKNFETLSEAFSVFQTLKYLAILGGVTFLAG.

Belongs to the SWP1 family. Component of the oligosaccharyltransferase (OST) complex.

It is found in the endoplasmic reticulum. The protein resides in the endoplasmic reticulum membrane. The protein operates within protein modification; protein glycosylation. Its function is as follows. Subunit of the oligosaccharyl transferase (OST) complex that catalyzes the initial transfer of a defined glycan (Glc(3)Man(9)GlcNAc(2) in eukaryotes) from the lipid carrier dolichol-pyrophosphate to an asparagine residue within an Asn-X-Ser/Thr consensus motif in nascent polypeptide chains, the first step in protein N-glycosylation. N-glycosylation occurs cotranslationally and the complex associates with the Sec61 complex at the channel-forming translocon complex that mediates protein translocation across the endoplasmic reticulum (ER). All subunits are required for a maximal enzyme activity. The chain is Dolichyl-diphosphooligosaccharide--protein glycosyltransferase subunit 2 from Gallus gallus (Chicken).